We begin with the raw amino-acid sequence, 231 residues long: MEEITINIDKIKINDDWKEFLRDEFQKKYFLEIKKQYLNAINQNIIIYPPANLIFNAFNLCPLKEIKIIILGQDPYHQPNQAMGLSFSVPKNVKIPPSLNNIFKELQNDLNITPAKSGDLSSWAKQGVLLLNSILSVEANKAASHSSWGWQEFSDAIIHKLSNEKSGLVFMLWGNYAKNKEILIDNTKHLILKAAHPSPLARTGFLGCKHFSKANEFLKKVGKIPIDWKIV.

Residue D74 is the Proton acceptor of the active site.

It belongs to the uracil-DNA glycosylase (UDG) superfamily. UNG family.

It localises to the cytoplasm. The enzyme catalyses Hydrolyzes single-stranded DNA or mismatched double-stranded DNA and polynucleotides, releasing free uracil.. Its function is as follows. Excises uracil residues from the DNA which can arise as a result of misincorporation of dUMP residues by DNA polymerase or due to deamination of cytosine. This Campylobacter jejuni subsp. jejuni serotype O:2 (strain ATCC 700819 / NCTC 11168) protein is Uracil-DNA glycosylase.